Here is a 567-residue protein sequence, read N- to C-terminus: Proline--tRNA ligase (567 aa).

Belongs to the class-II aminoacyl-tRNA synthetase family. ProS type 1 subfamily. As to quaternary structure, homodimer.

It localises to the cytoplasm. It catalyses the reaction tRNA(Pro) + L-proline + ATP = L-prolyl-tRNA(Pro) + AMP + diphosphate. Catalyzes the attachment of proline to tRNA(Pro) in a two-step reaction: proline is first activated by ATP to form Pro-AMP and then transferred to the acceptor end of tRNA(Pro). As ProRS can inadvertently accommodate and process non-cognate amino acids such as alanine and cysteine, to avoid such errors it has two additional distinct editing activities against alanine. One activity is designated as 'pretransfer' editing and involves the tRNA(Pro)-independent hydrolysis of activated Ala-AMP. The other activity is designated 'posttransfer' editing and involves deacylation of mischarged Ala-tRNA(Pro). The misacylated Cys-tRNA(Pro) is not edited by ProRS. This Staphylococcus aureus (strain USA300) protein is Proline--tRNA ligase.